We begin with the raw amino-acid sequence, 385 residues long: Methionine aminopeptidase 1 (385 aa).

The C6H2-type zinc finger occupies 6–59; that stretch reads SRVCETEGCSSEAKLQCPTCIKLGIQGSYFCSQECFKGSWATHKLLHKKAKDDK. Zn(2+) contacts are provided by cysteine 9, cysteine 14, cysteine 22, cysteine 25, cysteine 36, cysteine 40, histidine 48, and histidine 52. Histidine 203 serves as a coordination point for a protein. Aspartate 220, aspartate 231, and histidine 294 together coordinate Zn(2+). A protein is bound at residue histidine 301. Residues glutamate 327 and glutamate 358 each coordinate Zn(2+).

This sequence belongs to the peptidase M24A family. Methionine aminopeptidase type 1 subfamily. As to quaternary structure, associates with the 60S ribosomal subunit of the 80S translational complex. The cofactor is Zn(2+). Requires Co(2+) as cofactor. It depends on Mn(2+) as a cofactor. Fe(2+) serves as cofactor.

The protein resides in the cytoplasm. It carries out the reaction Release of N-terminal amino acids, preferentially methionine, from peptides and arylamides.. Its function is as follows. Cotranslationally removes the N-terminal methionine from nascent proteins. The N-terminal methionine is often cleaved when the second residue in the primary sequence is small and uncharged (Met-Ala-, Cys, Gly, Pro, Ser, Thr, or Val). This is Methionine aminopeptidase 1 (metap1) from Xenopus laevis (African clawed frog).